The following is a 1035-amino-acid chain: MEELNIDFDVFKKRIELLYSKYNEFEGSPNSLLFVLGSSNAENPYQKTTILHNWLLSYEFPATLIALVPGKVIIITSSAKAKHLQKAIDLFKDPESKITLELWQRNNKEPELNKKLFDDVIALINSAGKTVGIPEKDSYQGKFMTEWNPVWEAAVKENEFNVIDISLGLSKVWEVKDVNEQAFLSVSSKGSDKFMDLLSNEMVRAVDEELKITNAKLSDKIENKIDDVKFLKQLSPDLSALCPPNYKFNFDLLDWTYSPIIQSGKKFDLRVSARSTNDQLYGNGCILASCGIRYNNYCSNITRTFLIDPSEEMANNYDFLLTLQKEIVTNILKPGRTPKEVYESVIEYIEKTKPELVPNFTKNIGSLIGLEFRDSNFILNVKNDYRKIQRGDCFNISFGFNNLKDSQSANNYALQLADTVQIPLDETEPPRFLTNYTKAKSQISFYFNNEEEDNNKKKSSPATKVPSKPDRNSKILRTKLRGEARGGAEDAQKEQIRKENQKKLHEKLEKNGLLRFSAADANGPDSEPRQYFKKYESYVRDSQLPTNIRDLRIHVDWKSQTIILPIYGRPVPFHINSYKNGSKNEEGEYTYLRLNFNSPGSSGGISKKVEELPYEESADNQFVRSITLRSKDGDRMSETFKQIADLKKEATKREQERKALADVVQQDKLIENKTGRTKRLDQIFVRPNPDTKRVPSTVFIHENGIRFQSPLRTDSRIDILFSNIKNLIFQSCKGELIVVIHIHLKNPILMGKKKIQDVQFYREASDMSVDETGGGRRGQSRFRRYGDEDELEQEQEERRKRAALDKEFKYFADAIAEASNGLLTVENTFRDLGFQGVPNRSAVFCMPTTDCLVQLIEPPFLVINLEEVEICILERVQFGLKNFDMVFVYKDFNKPVTHINTVPIESLDFLKQWLTDMDIPYTVSTINLNWATIMKSLQDDPYQFFLDGGWNFLATGSDDEASDESEEEVSEYEASEDDVSDESAFSEDEEGSEVDDDISGDESEDYTGDESEEGEDWDELEKKAARADRGANFRD.

Residues 208 to 234 (EELKITNAKLSDKIENKIDDVKFLKQL) adopt a coiled-coil conformation. The tract at residues 448 to 496 (NNEEEDNNKKKSSPATKVPSKPDRNSKILRTKLRGEARGGAEDAQKEQI) is disordered. Positions 480 to 496 (LRGEARGGAEDAQKEQI) are enriched in basic and acidic residues. Residue serine 526 is modified to Phosphoserine. Positions 636 to 666 (MSETFKQIADLKKEATKREQERKALADVVQQ) form a coiled coil. Residue serine 765 is modified to Phosphoserine. 2 disordered regions span residues 768–796 (SVDE…QEQE) and 956–1035 (GSDD…NFRD). Acidic residues predominate over residues 957–1019 (SDDEASDESE…ESEEGEDWDE (63 aa)). Residues 959–983 (DEASDESEEEVSEYEASEDDVSDES) adopt a coiled-coil conformation. Over residues 1020–1035 (LEKKAARADRGANFRD) the composition is skewed to basic and acidic residues.

The protein belongs to the peptidase M24 family. SPT16 subfamily. In terms of assembly, forms a stable heterodimer with POB3. The SPT16-POB3 dimer weakly associates with multiple molecules of NHP6 (NHP6A or NHP6B) to form the FACT (yFACT or SNP) complex. The FACT complex interacts with the CK2 (casein kinase II) complex subunits CKA1, CKA2, CKB1 and CKB2 and the components of the transcription machinery CHD1, CTR9, PAF1 and CDC73. The FACT complex interacts with the PAF1 complex. Interacts with POL1. Interacts with SAS3. Interacts with YTA7.

It localises to the nucleus. Its subcellular location is the chromosome. In terms of biological role, component of the FACT complex, a general chromatin factor that acts to reorganize nucleosomes. The FACT complex is involved in multiple processes that require DNA as a template such as mRNA elongation, DNA replication and DNA repair. During transcription elongation the FACT complex acts as a histone chaperone that both destabilizes and restores nucleosomal structure. It facilitates the passage of RNA polymerase II and transcription by promoting the dissociation of one histone H2A-H2B dimer from the nucleosome, then subsequently promotes the reestablishment of the nucleosome following the passage of RNA polymerase II. Transcription elongation is promoted by the repression of transcription initiation from cryptic sites. Also acts in establishing transcription initiation complexes and promotes SPT15/TBP-binding to a TATA box. Together with replication factor-A protein (RPA), FACT may play a role in nucleosome deposition during DNA replication. In Saccharomyces cerevisiae (strain ATCC 204508 / S288c) (Baker's yeast), this protein is FACT complex subunit SPT16 (SPT16).